Reading from the N-terminus, the 750-residue chain is Amyloid-beta A4 precursor protein-binding family A member 2 (750 aa).

Disordered stretches follow at residues 1–94 (MAHR…PEEE) and 143–346 (DSVG…IPET). A Phosphoserine modification is found at serine 11. Residues 70 to 80 (GDSSSDYVNNT) are compositionally biased toward polar residues. Residues 81-94 (SEEEDYDEGLPEEE) show a composition bias toward acidic residues. The tract at residues 185 to 271 (HYCSSKESYQ…STEACPPSDT (87 aa)) is STXBP1-binding. Phosphoserine is present on serine 209. The span at 219 to 228 (DLEEQEEDID) shows a compositional bias: acidic residues. 2 stretches are compositionally biased toward polar residues: residues 238–248 (LSMTSITSASE) and 332–344 (SDLN…NNIP). The 190-residue stretch at 367–556 (LIDGIIFAAN…IINTQEMYND (190 aa)) folds into the PID domain. 2 consecutive PDZ domains span residues 569 to 654 (ELQL…NIVS) and 660 to 736 (TVLI…MPAA).

In terms of assembly, part of a multimeric complex containing STXBP1 and syntaxin-1. Binds to the cytoplasmic domain of amyloid-beta protein, and to the nuclear factor NF-kappa-B/p65 via its PDZ domain. Interacts with the N-terminal domain of NECAB3. Specifically expressed in neurons, predominantly of the cerebellum, hippocampus, and spinal cord. Lesser extent in neurons of the cerebral cortex and anterior thalmic nuclei.

Functionally, putative function in synaptic vesicle exocytosis by binding to STXBP1, an essential component of the synaptic vesicle exocytotic machinery. May modulate processing of the amyloid-beta precursor protein (APP) and hence formation of APP-beta. In Mus musculus (Mouse), this protein is Amyloid-beta A4 precursor protein-binding family A member 2 (Apba2).